Here is a 490-residue protein sequence, read N- to C-terminus: Phenylacetaldehyde synthase (490 aa).

Pro-92, His-193, and His-308 together coordinate L-phenylalanine. Lys-309 carries the post-translational modification N6-(pyridoxal phosphate)lysine. Phe-338 is a binding site for L-phenylalanine.

The protein belongs to the group II decarboxylase family. In terms of assembly, homodimer. Pyridoxal 5'-phosphate serves as cofactor. In terms of tissue distribution, expressed in roots, rosette leaves, stems, cauline leaves and flowers.

The catalysed reaction is L-phenylalanine + O2 + H2O + H(+) = 2-phenylacetaldehyde + H2O2 + NH4(+) + CO2. It catalyses the reaction L-dopa + O2 + H2O + H(+) = 3,4-dihydroxyphenylacetaldehyde + H2O2 + NH4(+) + CO2. Functionally, bifunctional enzyme that catalyzes the decarboxylation of L-phenylalanine to 2-phenylethylamine, which is then oxidized to form 2-phenylacetaldehyde, a constituent of floral scent. 2-phenylacetaldehyde is a precursor of 2-phenylethanol, another constituent of floral scent. Catalyzes both the decarboxylation and deamination of L-dopa to 3,4-dihydroxylphenylacetaldehyde (DHPAA). The protein is Phenylacetaldehyde synthase of Arabidopsis thaliana (Mouse-ear cress).